The sequence spans 470 residues: MTSPRTLYDKIWDDHVVDVQPDGSSLLYIDRHLVHEVTSPQAFEGLRVAGRKVRHPEKTLAVVDHNVQTSDRSQGIDDPESRTQLEALAENVRDFGIEFYDALDRRQGIVHIIGPEQGFTLPGQTIVCGDSHTSTHGAFGALAHGIGTSEVEHVLATQTLVQRKARNMRVSVDGTLPPGVTAKDIILAIIGEIGTAGGTGHVIEYAGEAIRALSMEGRMTICNMSIEGGARAGMVAPDATTFAYVKDRPKAPKGAAFDAARRYWESLVTDAGAHFDREVRLDAANLPPIVSWGTSPEDVISVQGRIPDPSEIADENKRQSKEKALAYMGLTPGTRITDITLDRIFIGSCTNGRIEDLREVARVVGDRKVHEGVSAMIVPGSGLVKAQAEAEGLDKILKAAGFDWREPGCSMCLGMNPDKLRPGERCASTSNRNFEGRQGPRGRTHLVSPAMAAAAAVAGRFVDIREWPQG.

Residues Cys-349, Cys-409, and Cys-412 each contribute to the [4Fe-4S] cluster site.

Belongs to the aconitase/IPM isomerase family. LeuC type 1 subfamily. In terms of assembly, heterodimer of LeuC and LeuD. [4Fe-4S] cluster is required as a cofactor.

The enzyme catalyses (2R,3S)-3-isopropylmalate = (2S)-2-isopropylmalate. It participates in amino-acid biosynthesis; L-leucine biosynthesis; L-leucine from 3-methyl-2-oxobutanoate: step 2/4. Functionally, catalyzes the isomerization between 2-isopropylmalate and 3-isopropylmalate, via the formation of 2-isopropylmaleate. In Methylobacterium radiotolerans (strain ATCC 27329 / DSM 1819 / JCM 2831 / NBRC 15690 / NCIMB 10815 / 0-1), this protein is 3-isopropylmalate dehydratase large subunit.